Reading from the N-terminus, the 481-residue chain is Aspartyl/glutamyl-tRNA(Asn/Gln) amidotransferase subunit B (481 aa).

The protein belongs to the GatB/GatE family. GatB subfamily. As to quaternary structure, heterotrimer of A, B and C subunits.

It carries out the reaction L-glutamyl-tRNA(Gln) + L-glutamine + ATP + H2O = L-glutaminyl-tRNA(Gln) + L-glutamate + ADP + phosphate + H(+). The catalysed reaction is L-aspartyl-tRNA(Asn) + L-glutamine + ATP + H2O = L-asparaginyl-tRNA(Asn) + L-glutamate + ADP + phosphate + 2 H(+). Its function is as follows. Allows the formation of correctly charged Asn-tRNA(Asn) or Gln-tRNA(Gln) through the transamidation of misacylated Asp-tRNA(Asn) or Glu-tRNA(Gln) in organisms which lack either or both of asparaginyl-tRNA or glutaminyl-tRNA synthetases. The reaction takes place in the presence of glutamine and ATP through an activated phospho-Asp-tRNA(Asn) or phospho-Glu-tRNA(Gln). The sequence is that of Aspartyl/glutamyl-tRNA(Asn/Gln) amidotransferase subunit B from Pseudomonas syringae pv. tomato (strain ATCC BAA-871 / DC3000).